A 93-amino-acid polypeptide reads, in one-letter code: Pyrimidine/purine nucleoside phosphorylase (93 aa).

It belongs to the nucleoside phosphorylase PpnP family.

The catalysed reaction is a purine D-ribonucleoside + phosphate = a purine nucleobase + alpha-D-ribose 1-phosphate. It carries out the reaction adenosine + phosphate = alpha-D-ribose 1-phosphate + adenine. The enzyme catalyses cytidine + phosphate = cytosine + alpha-D-ribose 1-phosphate. It catalyses the reaction guanosine + phosphate = alpha-D-ribose 1-phosphate + guanine. The catalysed reaction is inosine + phosphate = alpha-D-ribose 1-phosphate + hypoxanthine. It carries out the reaction thymidine + phosphate = 2-deoxy-alpha-D-ribose 1-phosphate + thymine. The enzyme catalyses uridine + phosphate = alpha-D-ribose 1-phosphate + uracil. It catalyses the reaction xanthosine + phosphate = alpha-D-ribose 1-phosphate + xanthine. In terms of biological role, catalyzes the phosphorolysis of diverse nucleosides, yielding D-ribose 1-phosphate and the respective free bases. Can use uridine, adenosine, guanosine, cytidine, thymidine, inosine and xanthosine as substrates. Also catalyzes the reverse reactions. In Shewanella halifaxensis (strain HAW-EB4), this protein is Pyrimidine/purine nucleoside phosphorylase.